A 606-amino-acid polypeptide reads, in one-letter code: Retrovirus-related Pol polyprotein from type-1 retrotransposable element R2 (606 aa).

Residues 1-208 (GTLANIIMLE…NTFKYLGLTF (208 aa)) enclose the Reverse transcriptase domain. Residues 331-606 (IFNIEGPARS…PPDPPRPVPP (276 aa)) form a nucleic acid-binding endonuclease region.

It carries out the reaction DNA(n) + a 2'-deoxyribonucleoside 5'-triphosphate = DNA(n+1) + diphosphate. The polypeptide is Retrovirus-related Pol polyprotein from type-1 retrotransposable element R2 (Popillia japonica (Japanese beetle)).